Reading from the N-terminus, the 147-residue chain is Protein phosphatase 1 regulatory subunit 14B (147 aa).

Residues 1-55 (MADSGTAGGAALAAPAPGPGSGGPGPRVYFQSPPGAAGEGPGGADDEGPVRRQGK) are disordered. N-acetylalanine is present on Ala2. The residue at position 21 (Ser21) is a Phosphoserine. The residue at position 29 (Tyr29) is a Phosphotyrosine. Ser32 is modified (phosphoserine). Residue Thr57 is modified to Phosphothreonine. Residues 61–103 (DRKELRKRLNLEEWILEQLTRLYDCQEEEIPELEIDVDELLDM) adopt a coiled-coil conformation.

It belongs to the PP1 inhibitor family. Phosphorylated primarily on Thr-57 by PKC (in vitro). An unknown Ser is also phosphorylated by PKC (in vitro). Ubiquitous. Expressed at low levels.

The protein resides in the cytoplasm. In terms of biological role, inhibitor of PPP1CA. Has over 50-fold higher inhibitory activity when phosphorylated. The protein is Protein phosphatase 1 regulatory subunit 14B (PPP1R14B) of Homo sapiens (Human).